The chain runs to 453 residues: Jacalin-related lectin 40 (453 aa).

Jacalin-type lectin domains follow at residues 1 to 142 (MAQK…YFTT), 154 to 296 (HIKL…YFSS), and 306 to 449 (PEKL…YVVP). N-acetylalanine is present on alanine 2.

Belongs to the jacalin lectin family. Expressed in roots.

This is Jacalin-related lectin 40 (JAL40) from Arabidopsis thaliana (Mouse-ear cress).